Reading from the N-terminus, the 212-residue chain is UPF0111 protein PH1389 (212 aa).

This sequence belongs to the UPF0111 family.

The polypeptide is UPF0111 protein PH1389 (Pyrococcus horikoshii (strain ATCC 700860 / DSM 12428 / JCM 9974 / NBRC 100139 / OT-3)).